The primary structure comprises 155 residues: FUN14 domain-containing protein 1 (155 aa).

Topologically, residues 1–47 are cytoplasmic; that stretch reads MATRNPPPQDYESDDDSYEVLDLTEYARRHQWWNRVFGHSSGPMVEK. Ser13 is modified (phosphoserine; by CK2). Phosphoserine; by ULK1 is present on Ser17. At Tyr18 the chain carries Phosphotyrosine; by SRC. The YXXL signature appears at 18–21; it reads YEVL. A helical membrane pass occupies residues 48 to 68; it reads YSVATQIVMGGVTGWCAGFLF. Over 69–74 the chain is Mitochondrial intermembrane; the sequence is QKVGKL. The chain crosses the membrane as a helical span at residues 75 to 95; sequence AATAVGGGFLLLQIASHSGYV. Residues 96–133 lie on the Cytoplasmic side of the membrane; that stretch reads QIDWKRVEKDVNKAKRQIKKRANKAAPEINNLIEEATE. Residue Lys119 forms a Glycyl lysine isopeptide (Lys-Gly) (interchain with G-Cter in ubiquitin) linkage. A helical membrane pass occupies residues 134–154; it reads FIKQNIVISSGFVGGFLLGLA. Ser155 is a topological domain (mitochondrial intermembrane).

This sequence belongs to the FUN14 family. In terms of assembly, interacts (via YXXL motif) with MAP1 LC3 family proteins MAP1LC3A, MAP1LC3B and GABARAP. Interacts with DNM1L/DPR1. Interacts with GPX4. Post-translationally, phosphorylation at Ser-13 by CK2 and at Tyr-18 by SRC inhibits activation of mitophagy. Following hypoxia, dephosphorylated at Tyr-18, leading to interaction with MAP1 LC3 family proteins and triggering mitophagy. Dephosphorylation is mediated by PGAM5. Phosphorylated by ULK1 at Ser-17 which enhances FUNDC1 binding to LC3. Ubiquitinated on Lys-119. Deubiquitinated by USP19; leading to hypoxia-induced DRP1 oligomerization and GTPase activity. In terms of tissue distribution, widely expressed.

The protein resides in the mitochondrion outer membrane. Integral mitochondrial outer-membrane protein that mediates the formation of mitochondria-associated endoplasmic reticulum membranes (MAMs). In turn, mediates angiogenesis and neoangiogenesis through interference with intracellular Ca(2+) communication and regulation of the vascular endothelial growth factor receptor KDR/VEGFR2 expression at both mRNA and protein levels. Also acts as an activator of hypoxia-induced mitophagy, an important mechanism for mitochondrial quality and homeostasis, by interacting with and recruiting LC3 protein family to mitochondria. Mechanistically, recruits DRP1 at ER-mitochondria contact sites leading to DRP1 oligomerization and GTPase activity to facilitate mitochondrial fission during hypoxia. Additionally, plays a role in hepatic ferroptosis by interacting directly with glutathione peroxidase/GPX4 to facilitate its recruitment into mitochondria through TOM/TIM complex where it is degraded by mitophagy. This chain is FUN14 domain-containing protein 1 (FUNDC1), found in Homo sapiens (Human).